The following is a 1285-amino-acid chain: Protein cramped-like (1285 aa).

Residues 1-161 (MTVKLGDAGS…EGKKVRRQWE (161 aa)) are disordered. The segment covering 13–24 (EGLKKLGKRTAD) has biased composition (basic and acidic residues). Over residues 57–71 (PAPPRGLPTPSPPQG) the composition is skewed to pro residues. The segment covering 100–116 (GSGGASGSGPRGKGSDG) has biased composition (gly residues). Low complexity-rich tracts occupy residues 117 to 126 (GASSSGNVSG) and 134 to 147 (GGSR…GSSG). A compositionally biased stretch (basic and acidic residues) spans 148 to 161 (PEKEEGKKVRRQWE). The SANT domain maps to 158–221 (RQWESWSTED…FYYRTWHKIT (64 aa)). Ser-304 carries the post-translational modification Phosphoserine. Disordered regions lie at residues 456–519 (GQLK…GPHL), 579–673 (RADT…VPAS), 766–843 (NTAS…SDSD), 994–1055 (SSGI…SPAL), 1068–1107 (GLSI…LSQG), and 1132–1172 (PLSP…YPSD). Residues 479–503 (ASQSSGESSPESAPAEGAAPSLSSP) are compositionally biased toward low complexity. 2 stretches are compositionally biased toward basic and acidic residues: residues 505–519 (APDR…GPHL) and 579–589 (RADTRSGREHP). Polar residues-rich tracts occupy residues 654 to 664 (EHLSSQGQPAT) and 766 to 784 (NTAS…STTP). A compositionally biased stretch (low complexity) spans 792 to 803 (NSRSPRCSRNPS). Residues 804 to 813 (TLRSNKTFPS) are compositionally biased toward polar residues. Residues 833-843 (GPSSTGSSDSD) are compositionally biased toward low complexity. Polar residues predominate over residues 994-1012 (SSGISPLSSEQATTAISGQ). 2 stretches are compositionally biased toward low complexity: residues 1069 to 1086 (LSIP…LSPP) and 1141 to 1156 (SDSS…SPQP). The residue at position 1284 (Ser-1284) is a Phosphoserine.

The protein belongs to the cramped family.

It is found in the nucleus. The protein is Protein cramped-like of Mus musculus (Mouse).